A 671-amino-acid chain; its full sequence is DNA polymerase kappa (671 aa).

Residues 105–285 (WLHVDMDAFY…LPVRKIGGIG (181 aa)) enclose the UmuC domain. 2 residues coordinate Mg(2+): aspartate 109 and aspartate 200. Glutamate 201 is an active-site residue. The UBZ3-type zinc-finger motif lies at 576-613 (YWIDGYKCVLCGIELPPSFVEERQEHSDFHLAQRLQNE). 4 residues coordinate Zn(2+): cysteine 583, cysteine 586, histidine 601, and histidine 605. The interval 607 to 671 (AQRLQNEETG…NQNSNETQRK (65 aa)) is disordered. Positions 625–632 (KRRILGKE) match the Nuclear localization signal motif. Basic and acidic residues predominate over residues 629–650 (LGKEKVNSKPKKQKPDQKDSSK). The span at 659 to 671 (TKSNQNSNETQRK) shows a compositional bias: polar residues.

This sequence belongs to the DNA polymerase type-Y family. Mg(2+) serves as cofactor. In terms of tissue distribution, expressed in roots, leaves, stems, flowers and siliques. Present in endoreduplicating cells.

It localises to the nucleus. The catalysed reaction is DNA(n) + a 2'-deoxyribonucleoside 5'-triphosphate = DNA(n+1) + diphosphate. Its activity is regulated as follows. Unable to bypass a single 1,N(6)-ethenoadenine (epsilon-dA) or an abasic site lesions in DNA templates. Its function is as follows. Template-directed low-fidelity DNA polymerase specifically involved in DNA repair. Able to extend primer-terminal mispairs, and to insert nucleotides opposite to a single 7,8-dihydro-8-oxoGuanine (8-oxoG) lesion and moderately extend from the resulting primer end, thus leading to both error-free and error-prone bypass of 8-oxoG DNA lesions. Probably involved in consecutive DNA replication cycles in the absence of mitosis. Binds preferentially template-primer DNA substrates or single-stranded DNA. Plays an important role in translesion synthesis, where the normal high-fidelity DNA polymerases cannot proceed and DNA synthesis stalls. Depending on the context, it inserts the correct base, but causes frequent base transitions, transversions and frameshifts. This chain is DNA polymerase kappa, found in Arabidopsis thaliana (Mouse-ear cress).